The sequence spans 265 residues: Short-chain dehydrogenase/reductase phqE (265 aa).

NADP(+)-binding residues include Thr23, Ser24, Ile26, Ser46, Asn47, Lys50, Asp76, Arg131, Val203, and Thr205. Residues 25 to 45 (GIGFAVCAAALGHGAIVTIVG) traverse the membrane as a helical segment.

The protein belongs to the short-chain dehydrogenases/reductases (SDR) family. It depends on NADP(+) as a cofactor.

It localises to the membrane. It functions in the pathway alkaloid biosynthesis. Short-chain dehydrogenase/reductase; part of the gene cluster that mediates the biosynthesis of paraherquamide, a fungal indole alkaloid that belongs to a family of natural products containing a characteristic bicyclo[2.2.2]diazaoctane core. The first steps in the biosynthesis of paraherquamide is the production of the beta-methyl-proline precursor from L-isoleucine. They require oxidation of a terminally hydroxylated L-isoleucine to the corresponding aldehyde by enzymes which have still to be identified. Spontaneous cyclization and dehydration would yield the 4-methyl pyrolline-5-carboxylic acid, which is then reduced by the pyrroline-5-carboxylate reductase phqD leading to the beta-methyl-proline precursor. The next step of paraherquamide biosynthesis involves coupling of beta-methyl-proline and L-tryptophan by the bimodular NRPS phqB, to produce a monooxopiperazine intermediate. The reductase (R) domain of phqB utilizes NADPH for hydride transfer to reduce the thioester bond of the T domain-tethered linear dipeptide to a hemithioaminal intermediate, which spontaneously cleaves the C-S bond to release the aldehyde product. This compound undergoes spontaneous cyclization and dehydration to give a dienamine which is reverse prenylated at C-2 by the reverse prenyltransferase phqJ. The other prenyltransferase present in the cluster, phqI may be a redundant gene in the pathway. During biosynthetic assembly, the key step to produce the polycyclic core is catalyzed by the bifunctional reductase and intramolecular [4+2] Diels-Alderase, phqE, resulting in formation of the [2.2.2] diazaoctane intermediate preparaherquamide. Following formation of preparaherquamide, an indole 2,3-epoxidation-initiated pinacol-like rearrangement is catalyzed by the phqK FAD-dependent monooxygenase. The prenyltransferase phqA, the cytochrome P450 monooxygenase phqL, and the FAD-linked oxidoreductase phqH (or the cytochrome P450 monooxygenase phqM), are proposed to be involved in the formation of the pyran ring. The FAD-dependent monooxygenase phqK is likely responsible for generation of the spiro-oxindole, and the N-methylation is likely mediated by the phqN methyltransferase leading to the isolable natural product paraherquamide F. However, the order of these biosynthetic steps has still to be determined. In late-stage paraherquamide biosynthesis, the third P450 monooxygenase, phqO, is probably responsible for the C-14 hydroxylation, transforming paraherquamide F to paraherquamide G, and paraherquamide E to the final product paraherquamide A. The expansion from the 6-membered ring pyran (in paraherquamides F and G) to the 7-membered dioxepin ring (in paraherquamides A and E) represents a poorly understood but intriguing process that probably involves the 2-oxoglutarate-dependent dioxygenase phqC. Finally, the remaining members of the paraherquamide cluster, including phqI as well as phqM (or phqH), do not have a clearly prescribed role and appear to be redundant. The sequence is that of Short-chain dehydrogenase/reductase phqE from Penicillium fellutanum.